The sequence spans 431 residues: tRNA(Ile)-lysidine synthase (431 aa).

19–24 serves as a coordination point for ATP; it reads STGIDS.

The protein belongs to the tRNA(Ile)-lysidine synthase family.

It localises to the cytoplasm. It catalyses the reaction cytidine(34) in tRNA(Ile2) + L-lysine + ATP = lysidine(34) in tRNA(Ile2) + AMP + diphosphate + H(+). Ligates lysine onto the cytidine present at position 34 of the AUA codon-specific tRNA(Ile) that contains the anticodon CAU, in an ATP-dependent manner. Cytidine is converted to lysidine, thus changing the amino acid specificity of the tRNA from methionine to isoleucine. This chain is tRNA(Ile)-lysidine synthase, found in Staphylococcus aureus (strain COL).